Consider the following 507-residue polypeptide: Arylsulfatase A (507 aa).

The N-terminal stretch at Met1 to Ala18 is a signal peptide. Positions 29, 30, and 69 each coordinate Ca(2+). Residue Cys69 is the Nucleophile of the active site. Cys69 bears the 3-oxoalanine (Cys) mark. Residue Lys123 coordinates substrate. Residue His125 is part of the active site. Residue Ser150 coordinates substrate. Cystine bridges form between Cys156-Cys172 and Cys161-Cys168. N-linked (GlcNAc...) asparagine glycosylation occurs at Asn158. N-linked (GlcNAc...) asparagine glycosylation is present at Asn184. His229 contributes to the substrate binding site. Ca(2+)-binding residues include Asp281 and Asn282. 4 disulfide bridges follow: Cys300-Cys414, Cys488-Cys500, Cys489-Cys502, and Cys493-Cys499. Lys302 lines the substrate pocket. N-linked (GlcNAc...) asparagine glycosylation is present at Asn350.

This sequence belongs to the sulfatase family. In terms of assembly, homodimer at neutral pH and homooctamer at acidic pH. Exists both as a single chain of 58 kDa (component A) or as a chain of 50 kDa (component B) linked by disulfide bond(s) to a 7 kDa chain (component C). Interacts with SUMF1. The cofactor is Ca(2+). Post-translationally, the conversion to 3-oxoalanine (also known as C-formylglycine, FGly), of a serine or cysteine residue in prokaryotes and of a cysteine residue in eukaryotes, is critical for catalytic activity. This post-translational modification is severely defective in multiple sulfatase deficiency (MSD).

It is found in the endoplasmic reticulum. Its subcellular location is the lysosome. The catalysed reaction is an N-acyl-1-beta-D-(3-O-sulfo)-galactosyl-sphing-4-enine + H2O = a beta-D-galactosyl-(1&lt;-&gt;1')-N-acylsphing-4-enine + sulfate + H(+). Inhibited by phosphate. The phosphate forms a covalent bond with the active site 3-oxoalanine. In terms of biological role, hydrolyzes cerebroside sulfate. In Homo sapiens (Human), this protein is Arylsulfatase A (ARSA).